The chain runs to 449 residues: Sensor histidine protein kinase/phosphatase WalK (449 aa).

The Extracellular portion of the chain corresponds to 1 to 13; sequence MLDLLKQTIFTRD. Residues 14 to 34 form a helical membrane-spanning segment; that stretch reads FIFILILLGFILVVTLLLLEN. One can recognise an HAMP domain in the interval 35-87; that stretch reads RRDNIQLKQINQKVKDLIAGDYSKVLDMQGGSEITNITNNLNDLSEVIRLTQE. The Cytoplasmic portion of the chain corresponds to 35 to 449; it reads RRDNIQLKQI…EEVWEDEVED (415 aa). Residues 92–158 form the PAS domain; sequence ESKRLNSILF…YELRDLITQS (67 aa). The PAC domain occupies 157-211; the sequence is QSPELLLDSQDINGEYLNLRVRFALIRRESGFISGLVAVLHDTTEQEKEERERRL. Positions 215–435 constitute a Histidine kinase domain; the sequence is NVSHELRTPL…TFTIVLPYDK (221 aa). At histidine 218 the chain carries Phosphohistidine.

As to quaternary structure, may form homodimers. May interact with serine/threonine-protein kinase StkP; the interaction may play a role in regulating Walk signal transduction. In terms of processing, autophosphorylated.

It is found in the membrane. The enzyme catalyses ATP + protein L-histidine = ADP + protein N-phospho-L-histidine.. Member of the two-component regulatory system WalK/WalR that regulates genes involved in cell wall metabolism. Functions as a sensor protein kinase which is autophosphorylated at a histidine residue and transfers its phosphate group to WalR. In turn, WalR binds to the upstream promoter regions of target genes to positively and negatively regulate their expression. Required to maintain expression of WalRK regulon genes in exponentially growing cells, including peptidoglycan hydrolase pcsB. Phosphorylates WalR and also capable of dephosphorylation of WalR. WalK phosphatase activity is probably involved in preventing cross-talk from PnpS and other non-cognate sensor kinases during exponential growth. May be considered a potential virulence factor. The chain is Sensor histidine protein kinase/phosphatase WalK from Streptococcus pneumoniae serotype 2 (strain D39 / NCTC 7466).